The sequence spans 453 residues: Putative long chain fatty acid-CoA ligase VraA (453 aa).

Belongs to the ATP-dependent AMP-binding enzyme family.

This Staphylococcus epidermidis (strain ATCC 35984 / DSM 28319 / BCRC 17069 / CCUG 31568 / BM 3577 / RP62A) protein is Putative long chain fatty acid-CoA ligase VraA (vraA).